The chain runs to 158 residues: Nuclear cap-binding protein subunit 2 (158 aa).

MRNA is bound by residues tyrosine 17, tyrosine 40, 109–113 (RADWD), 120–124 (RQYGR), and 130–131 (QV). Residues 37–115 (CTLYVGNLSY…RVIRADWDAG (79 aa)) enclose the RRM domain. A disordered region spans residues 123–158 (GRGKHGGQVRDEYRKDYDPERGGYNRAIAQKGGDRQ). Residues 130–145 (QVRDEYRKDYDPERGG) show a composition bias toward basic and acidic residues.

Belongs to the RRM NCBP2 family. Component of the nuclear cap-binding complex (CBC), a heterodimer composed of ncbp-1 and ncbp-2 that interacts with m7GpppG-capped RNA.

It is found in the nucleus. Component of the cap-binding complex (CBC), which binds co-transcriptionally to the 5' cap of pre-mRNAs and is involved in various processes such as pre-mRNA splicing and RNA-mediated gene silencing (RNAi). The CBC complex is involved in miRNA-mediated RNA interference and is required for primary microRNAs (miRNAs) processing. In the CBC complex, ncbp-2 recognizes and binds capped RNAs (m7GpppG-capped RNA) but requires ncbp-1 to stabilize the movement of its N-terminal loop and lock the CBC into a high affinity cap-binding state with the cap structure. The sequence is that of Nuclear cap-binding protein subunit 2 (ncbp-2) from Caenorhabditis elegans.